Here is a 584-residue protein sequence, read N- to C-terminus: NADPH-dependent diflavin oxidoreductase 1 (584 aa).

Residues 6–150 enclose the Flavodoxin-like domain; the sequence is IYILYGSETG…VFAYWCNHLY (145 aa). FMN-binding positions include 12-17, 59-62, 97-106, and Glu132; these read SETGTA, STTG, and CGDTSYTRFN. The region spanning 199 to 436 is the FAD-binding FR-type domain; it reads RGKIEATLVH…LPGFLNLSYQ (238 aa). Residues Arg343, 373-376, and 407-410 contribute to the FAD site; these read RQYS and GICS. NADP(+)-binding positions include Thr448, 503–504, and 509–513; these read SR and KKYVQ. An FAD-binding site is contributed by Trp584.

Belongs to the NADPH-dependent diflavin oxidoreductase NDOR1 family. It in the N-terminal section; belongs to the flavodoxin family. The protein in the C-terminal section; belongs to the flavoprotein pyridine nucleotide cytochrome reductase family. In terms of assembly, interacts with dre2; as part of the cytosolic iron-sulfur (Fe-S) protein assembly (CIA) machinery. It depends on FAD as a cofactor. FMN serves as cofactor.

It localises to the cytoplasm. The protein localises to the mitochondrion. It catalyses the reaction 2 oxidized [2Fe-2S]-[protein] + NADPH = 2 reduced [2Fe-2S]-[protein] + NADP(+) + H(+). Its function is as follows. NADPH-dependent reductase which is a central component of the cytosolic iron-sulfur (Fe-S) protein assembly (CIA) machinery. Transfers electrons from NADPH via its FAD and FMN prosthetic groups to the [2Fe-2S] cluster of dre2, another key component of the CIA machinery. In turn, this reduced cluster provides electrons for assembly of cytosolic iron-sulfur cluster proteins. Positively controls H(2)O(2)-induced cell death. In Schizosaccharomyces pombe (strain 972 / ATCC 24843) (Fission yeast), this protein is NADPH-dependent diflavin oxidoreductase 1.